A 518-amino-acid chain; its full sequence is Adenine deaminase (518 aa).

It belongs to the metallo-dependent hydrolases superfamily. Adenine deaminase family. Requires Mn(2+) as cofactor.

It carries out the reaction adenine + H2O + H(+) = hypoxanthine + NH4(+). The protein is Adenine deaminase of Methanoculleus marisnigri (strain ATCC 35101 / DSM 1498 / JR1).